Here is a 251-residue protein sequence, read N- to C-terminus: DVDMAMIEQLREAVDLLQDPDRLSTDVSERNVVNFYPVESAEALDLQDSALNGQIQLETSPVCEVQNDLTLQSNGSEYSPNEIRANSPAISPTANSTGPFGLKPRSVFLRPQRNLESIDPQFTIRRKMEQMREEKELVEHLRESIEMRLKVSLHEDLGAALMDGVVLCHLVNHIRPRSVASIHVPSPAVPKLSMAKCRRNVENFLEACRKLGVPEEKLCLPHHILEEKGLVKVGITVQALLDVTVTKSLFT.

The segment at 73–97 is disordered; it reads SNGSEYSPNEIRANSPAISPTANST. Phosphoserine is present on residues serine 87 and serine 91. A compositionally biased stretch (polar residues) spans 88–97; sequence PAISPTANST. Threonine 123 is subject to Phosphothreonine. The 114-residue stretch at 131 to 244 folds into the Calponin-homology (CH) domain; sequence MREEKELVEH…ITVQALLDVT (114 aa).

In terms of assembly, interacts (via LRR repeats) with unphosphorylated DOCK8 (via DHR-2 domain); the interaction prevents the interaction between DOCK8 and CDC42.

Its subcellular location is the cytoplasm. In terms of biological role, acts as a negative regulator of GTPase CDC42 by sequestering CDC42-guanine exchange factor DOCK8. Probably by preventing CDC42 activation, negatively regulates CD4(+) T-cell migration. The chain is Leucine-rich repeat and calponin homology domain-containing protein 1 from Felis catus (Cat).